The chain runs to 150 residues: Cell division protein SepF (150 aa).

Belongs to the SepF family. Homodimer. Interacts with FtsZ.

It is found in the cytoplasm. Functionally, cell division protein that is part of the divisome complex and is recruited early to the Z-ring. Probably stimulates Z-ring formation, perhaps through the cross-linking of FtsZ protofilaments. Its function overlaps with FtsA. This is Cell division protein SepF from Clostridium beijerinckii (strain ATCC 51743 / NCIMB 8052) (Clostridium acetobutylicum).